A 453-amino-acid chain; its full sequence is Zinc finger and BTB domain-containing protein 44 (453 aa).

Lysine 4 participates in a covalent cross-link: Glycyl lysine isopeptide (Lys-Gly) (interchain with G-Cter in SUMO2). In terms of domain architecture, BTB spans 31 to 98 (CDITIRVQDR…AYTATLSINT (68 aa)). Phosphoserine occurs at positions 135, 159, 161, 165, 191, 194, and 199. Threonine 200 bears the Phosphothreonine mark. Positions 241-265 (QPEKAKQAENTRTLELPGPSEAGRR) are disordered. A Glycyl lysine isopeptide (Lys-Gly) (interchain with G-Cter in SUMO2) cross-link involves residue lysine 290. 2 disordered regions span residues 295-324 (SDEE…PGSE) and 336-368 (SSSI…EDDR). Low complexity predominate over residues 304–318 (SQPVSASQSSLSDQQ). The segment covering 352-361 (TLQSTSSTNA) has biased composition (polar residues). 2 C2H2-type zinc fingers span residues 399 to 421 (FQCP…MLIH) and 427 to 449 (FQCD…RLKH).

It localises to the nucleus. The sequence is that of Zinc finger and BTB domain-containing protein 44 (Zbtb44) from Rattus norvegicus (Rat).